We begin with the raw amino-acid sequence, 256 residues long: Ubiquinone/menaquinone biosynthesis C-methyltransferase UbiE (256 aa).

Residues 1-12 show a composition bias toward basic and acidic residues; it reads MNDQRKGDHAEP. The disordered stretch occupies residues 1–23; the sequence is MNDQRKGDHAEPTTHFGYQDVPE. Residues Thr-79, Asp-100, and 128–129 contribute to the S-adenosyl-L-methionine site; that span reads DA.

This sequence belongs to the class I-like SAM-binding methyltransferase superfamily. MenG/UbiE family.

It carries out the reaction a 2-demethylmenaquinol + S-adenosyl-L-methionine = a menaquinol + S-adenosyl-L-homocysteine + H(+). It catalyses the reaction a 2-methoxy-6-(all-trans-polyprenyl)benzene-1,4-diol + S-adenosyl-L-methionine = a 5-methoxy-2-methyl-3-(all-trans-polyprenyl)benzene-1,4-diol + S-adenosyl-L-homocysteine + H(+). Its pathway is quinol/quinone metabolism; menaquinone biosynthesis; menaquinol from 1,4-dihydroxy-2-naphthoate: step 2/2. It participates in cofactor biosynthesis; ubiquinone biosynthesis. Functionally, methyltransferase required for the conversion of demethylmenaquinol (DMKH2) to menaquinol (MKH2) and the conversion of 2-polyprenyl-6-methoxy-1,4-benzoquinol (DDMQH2) to 2-polyprenyl-3-methyl-6-methoxy-1,4-benzoquinol (DMQH2). This is Ubiquinone/menaquinone biosynthesis C-methyltransferase UbiE from Pseudomonas putida (strain ATCC 700007 / DSM 6899 / JCM 31910 / BCRC 17059 / LMG 24140 / F1).